A 227-amino-acid polypeptide reads, in one-letter code: Germin-like protein 3-5 (227 aa).

A signal peptide spans 1-29; that stretch reads MEYGFKAAGLVFVVLLLQQAPVLIRATDA. A disulfide bridge links C36 with C51. In terms of domain architecture, Cupin type-1 spans 65 to 217; sequence SKIATGGDVN…ALRVDAGVVE (153 aa). N-linked (GlcNAc...) asparagine glycans are attached at residues N78 and N81. Mn(2+)-binding residues include H114, H116, E121, and H163.

Belongs to the germin family. As to quaternary structure, oligomer (believed to be a pentamer but probably hexamer).

The protein localises to the secreted. It localises to the extracellular space. The protein resides in the apoplast. In terms of biological role, may play a role in plant defense. Probably has no oxalate oxidase activity even if the active site is conserved. The sequence is that of Germin-like protein 3-5 from Oryza sativa subsp. japonica (Rice).